A 481-amino-acid chain; its full sequence is MAQSAERPRPYAFMTANATRPVRTRFAPSPTGFLHLGGARTALFSWAFARHHQGVFVLRIEDTDVERSTPEAVQAILDSMDWLGMQPDEGPFYQMKRMDRYAEVLAGMLEAGTAYHCYCSPEEVDAMREAARAKGLKPRYDGTWRPEPGKTLPPVPADRKPVIRFRNPIDGATSWNDMVKGPISFDNGELDDLIIARPDGTPTYNFCVVVDDWDMGITHVLRGDDHVNNTPRQINILRALGATLPEYGHVPMILGPDGEKLSKRHGAVNVMEYDAQGYLPEAMVNYLARLGWSHGDDELFTREQLVEWFDTRHLSKSASQWDPKKLNWVNAHYIKGMDDAELAGRVAPRVERRGGKPQAADLPAIMGLLKDRAETLEQLAEDAMLFCGEYQPAPAELAAQHLTETARAALADFAARARDTEWNRAAISALIKAVLADRGLKMPQLGIPLRVAVTGRAQTPAVDAVLELLGKETVLARLQAL.

The 'HIGH' region signature appears at 28 to 38 (PSPTGFLHLGG). Over residues 139 to 148 (RYDGTWRPEP) the composition is skewed to basic and acidic residues. The segment at 139–159 (RYDGTWRPEPGKTLPPVPADR) is disordered. The short motif at 260 to 264 (KLSKR) is the 'KMSKS' region element. Lys-263 provides a ligand contact to ATP.

It belongs to the class-I aminoacyl-tRNA synthetase family. Glutamate--tRNA ligase type 1 subfamily. As to quaternary structure, monomer.

The protein localises to the cytoplasm. It catalyses the reaction tRNA(Glu) + L-glutamate + ATP = L-glutamyl-tRNA(Glu) + AMP + diphosphate. Catalyzes the attachment of glutamate to tRNA(Glu) in a two-step reaction: glutamate is first activated by ATP to form Glu-AMP and then transferred to the acceptor end of tRNA(Glu). This Bordetella bronchiseptica (strain ATCC BAA-588 / NCTC 13252 / RB50) (Alcaligenes bronchisepticus) protein is Glutamate--tRNA ligase.